The sequence spans 695 residues: Nucleoprotein (695 aa).

Coiled-coil stretches lie at residues 316 to 341 (VNVGEQYQQLREAAHDAEIKLQRRHE) and 372 to 399 (QTLAVLSQKREKLARLAAEIENNIVEDQ). Disordered regions lie at residues 423–458 (VQARPINRPTALPPPVDNKIEHESTEDSSSSSSFVD), 483–515 (TSREFQGIPAPPRQSQDLNNSQGKQEDESTNPI), and 527–612 (PVQE…DTRA). Composition is skewed to polar residues over residues 495–505 (RQSQDLNNSQG) and 537–552 (TTDSQESIDQPGSDNE). The PTAP/PSAP motif signature appears at 603–606 (PSAP).

It belongs to the filoviruses nucleoprotein family. In terms of assembly, homooligomer. Homomultimerizes to form the nucleocapsid. Binds to viral genomic RNA. Interacts with VP35 and VP30 to form the nucleocapsid. Also interacts with VP24 and VP40. Post-translationally, phosphorylated.

Its subcellular location is the virion. The protein localises to the host cytoplasm. Its function is as follows. Encapsidates the genome, protecting it from nucleases. The encapsidated genomic RNA is termed the nucleocapsid and serves as template for transcription and replication. During replication, encapsidation by NP is coupled to RNA synthesis and all replicative products are resistant to nucleases. In Chlorocebus aethiops (Green monkey), this protein is Nucleoprotein (NP).